The sequence spans 582 residues: PX domain-containing protein kinase-like protein (582 aa).

A PX domain is found at 14 to 126; it reads LDDTVPLTAA…KFLDPNNYSA (113 aa). The region spanning 88–481 is the Protein kinase domain; the sequence is FIAERQRGLQ…VENSEEQPVK (394 aa). A disordered region spans residues 433–550; the sequence is EQKQIHQHRR…APFLPQPVNG (118 aa). Composition is skewed to basic residues over residues 437–448 and 457–469; these read IHQHRRLTRAQS and KRRK…KSKR. Low complexity predominate over residues 483 to 514; the sequence is SNSNNSAGSGASSPLTSPSSPTPPSTAGLSSA. The segment covering 515 to 531 has biased composition (pro residues); sequence LPPPPPPPPPPPPPAGP. The WH2 domain occupies 548–567; the sequence is VNGVNRGALLSSIQNFQKGT.

It belongs to the protein kinase superfamily. As to expression, isoform 1 is present in all tissues examined. Isoform 2 is found in all tissues except skeletal muscle and very low levels in spleen. Both isoforms are widely expressed throughout the nervous system however levels of isoform 2 are higher in purified hippocampal and cortical neurons whereas glial cells express more isoform 1 than isoform 2.

The protein localises to the cytoplasm. The protein resides in the cell membrane. Its function is as follows. Binds to and modulates brain Na,K-ATPase subunits ATP1B1 and ATP1B3 and may thereby participate in the regulation of electrical excitability and synaptic transmission. May not display kinase activity. The protein is PX domain-containing protein kinase-like protein of Mus musculus (Mouse).